Reading from the N-terminus, the 611-residue chain is MAKMRVRLPMLILLLGVVFLLAASIGIAYGEKDFTKNPPKEREEEEHEPRQQPRPRQQEEQEREHRREEKHDGEPSRGRSQSEESQEEEHERRREHHREREQEQQPRPQRRQEEEEEEEEWQPRRQRPQSRREEREEREQEQGSSSGSQRGSGDERRQHRERRVHREEREQEQDSRSDSRRQRNPYHFSSNRFQTYYRNRNGQIRVLERFNQRTNRLENLQNYRIIEFQSKPNTLILPKHSDADFILVVLNGRATITIVNPDKRQVYNLEQGDALRLPAGTTSYILNPDDNQNLRVAKLAIPINNPGKLYDFYPSTTKDQQSYFSGFSKNTLEATFNTRYEEIERVLLGDDELQENEKQRRGQEQSHQDEGVIVRVSKKQIQELRKHAQSSSGEGKPSESGPFNLRSNKPIYSNKFGNFYEITPDINPQFQDLNISLTFTEINEGALLLPHYNSKAIFIVVVDEGEGNYELVGIRDQQRQQDEQEEEYEQGEEEVRRYSDKLSKGDVFIIPAGHPLSINASSNLRLLGFGINANENQRNFLAGSEDNVIKQLDREVKELTFPGSIEDVERLIKNQQQSYFANAQPQQQQQREKEGRRGRRGPISSILNALY.

An N-terminal signal peptide occupies residues 1–30 (MAKMRVRLPMLILLLGVVFLLAASIGIAYG). Basic and acidic residues-rich tracts occupy residues 32-82 (KDFT…RSQS) and 130-141 (SRREEREEREQE). Disordered regions lie at residues 32 to 194 (KDFT…NRFQ) and 384 to 407 (LRKH…NLRS). The span at 142-151 (QGSSSGSQRG) shows a compositional bias: low complexity. The span at 152–181 (SGDERRQHRERRVHREEREQEQDSRSDSRR) shows a compositional bias: basic and acidic residues. Residues 186 to 344 (YHFSSNRFQT…TFNTRYEEIE (159 aa)) enclose the Cupin type-1 1 domain. Residues 390-402 (SSSGEGKPSESGP) are compositionally biased toward low complexity. In terms of domain architecture, Cupin type-1 2 spans 403–569 (FNLRSNKPIY…TFPGSIEDVE (167 aa)). N-linked (GlcNAc...) asparagine glycosylation is present at N434. Positions 476-495 (DQQRQQDEQEEEYEQGEEEV) are disordered. Residues 483 to 492 (EQEEEYEQGE) are compositionally biased toward acidic residues. A glycan (N-linked (GlcNAc...) asparagine) is linked at N519. Residues 580–589 (FANAQPQQQQ) show a composition bias toward low complexity. A disordered region spans residues 580-600 (FANAQPQQQQQREKEGRRGRR).

Belongs to the 7S seed storage protein family. Component of globulins complexes which accumulate in seeds.

Functionally, seed storage protein. Accumulates during seed development and is hydrolyzed after germination to provide a carbon and nitrogen source for the developing seedling. The chain is Conglutin beta 1 from Lupinus angustifolius (Narrow-leaved blue lupine).